Consider the following 298-residue polypeptide: HTH-type transcriptional regulator TsaR (298 aa).

An HTH lysR-type domain is found at 1 to 58 (MKLQTLQALICIEEVGSLRAAAQLLHLSQPALSAAIQQLEDELKAPLLVRTKRGVSLT). Residues 18 to 37 (LRAAAQLLHLSQPALSAAIQ) constitute a DNA-binding region (H-T-H motif). Residues Ser98 and Ala100 each coordinate toluene-4-sulfonate.

It belongs to the LysR transcriptional regulatory family. In terms of assembly, homotetramer. Dimer of dimers related by a twofold axis.

With respect to regulation, sensitive to oxygen. Its function is as follows. Regulates expression of the tsaMBCD1 operon and of tsaT in response to p-toluenesulfonate (TSA). Acts by binding directly to the promoter region. Binding to the tsa promoter depends on TSA concentration. The sequence is that of HTH-type transcriptional regulator TsaR (tsaR) from Comamonas testosteroni (Pseudomonas testosteroni).